A 289-amino-acid chain; its full sequence is MALAAARRVLLQAGSRLGRRGAVDGARRFSNKRVLVEKEGEAGIAVMKFKNPPVNSLSLEFLTEFVISLEKLENDKSIRGVILTSERPGIFSAGLDLMEMYGRNPAHYAEYWKAVQELWLRLYLSNLTLISAINGASPAGGCLMALTCDYRIMADNSKYTIGLNESLLGIVAPFWLKDNYVNTIGHRAAERALQLGTLFPPAEALKVGLVDEVVPEDQVHSKARSVMAKWFTIPDHSRQLTKSMMRKATADNLIKQREADIQNFTSFISRDSIQKSLHVYLEKLKQKKG.

The N-terminal 28 residues, 1–28 (MALAAARRVLLQAGSRLGRRGAVDGARR), are a transit peptide targeting the mitochondrion. Lys48 is subject to N6-acetyllysine; alternate. Residue Lys48 is modified to N6-succinyllysine; alternate. N6-succinyllysine is present on Lys71. Lys76 is modified (N6-acetyllysine). Residues 93–97 (AGLDL), Gly140, and Asn164 contribute to the substrate site. 3 positions are modified to N6-acetyllysine; alternate: Lys222, Lys229, and Lys255. Residues Lys222, Lys229, and Lys255 each carry the N6-succinyllysine; alternate modification. Position 275 is an N6-succinyllysine (Lys275). Lys283 carries the N6-acetyllysine; alternate modification. The residue at position 283 (Lys283) is an N6-succinyllysine; alternate.

Belongs to the enoyl-CoA hydratase/isomerase family. As to quaternary structure, homotrimer.

It is found in the mitochondrion matrix. It carries out the reaction a (3Z)-enoyl-CoA = a 4-saturated (2E)-enoyl-CoA. It catalyses the reaction a (3E)-enoyl-CoA = a 4-saturated (2E)-enoyl-CoA. The catalysed reaction is (3Z)-octenoyl-CoA = (2E)-octenoyl-CoA. The enzyme catalyses (2E)-tetradecenoyl-CoA = (3Z)-tetradecenoyl-CoA. It carries out the reaction (3Z)-dodecenoyl-CoA = (2E)-dodecenoyl-CoA. It catalyses the reaction (3Z)-hexenoyl-CoA = (2E)-hexenoyl-CoA. The catalysed reaction is (3Z)-decenoyl-CoA = (2E)-decenoyl-CoA. It functions in the pathway lipid metabolism; fatty acid beta-oxidation. Key enzyme of fatty acid beta-oxidation. Able to isomerize both 3-cis (3Z) and 3-trans (3E) double bonds into the 2-trans (2E) form in a range of enoyl-CoA species, with a preference for (3Z)-enoyl-CoAs over (3E)-enoyl-CoAs. The catalytic efficiency of this enzyme is not affected by the fatty acyl chain length. This Rattus norvegicus (Rat) protein is Enoyl-CoA delta isomerase 1, mitochondrial.